Here is a 1120-residue protein sequence, read N- to C-terminus: Isoleucine--tRNA ligase (1120 aa).

The 'HIGH' region motif lies at 64–74; sequence PFANGLPHYGH. The 'KMSKS' region motif lies at 647-651; sequence KLSKR. An ATP-binding site is contributed by Lys650.

Belongs to the class-I aminoacyl-tRNA synthetase family. IleS type 2 subfamily. Monomer. Zn(2+) serves as cofactor.

It is found in the cytoplasm. It catalyses the reaction tRNA(Ile) + L-isoleucine + ATP = L-isoleucyl-tRNA(Ile) + AMP + diphosphate. Its function is as follows. Catalyzes the attachment of isoleucine to tRNA(Ile). As IleRS can inadvertently accommodate and process structurally similar amino acids such as valine, to avoid such errors it has two additional distinct tRNA(Ile)-dependent editing activities. One activity is designated as 'pretransfer' editing and involves the hydrolysis of activated Val-AMP. The other activity is designated 'posttransfer' editing and involves deacylation of mischarged Val-tRNA(Ile). In Ehrlichia canis (strain Jake), this protein is Isoleucine--tRNA ligase.